The primary structure comprises 269 residues: MSVLDEIIDGVRADLAERQARVSLDELKERAARAPQAKDGVAALRGEGVTVICEVKRSSPSKGALAAIADPAALAADYEAGGASVISVLTEERRFGGSLADLEAVRAKVDIPILRKDFIVTSYQLWEARAYGADLALLIVAALDQEALVSLIERAESIGLTPLVEAHDEEEAERAVDAGAKIIGVNARNLKDLKVDRSTFERVAPEIPDHIVKVAESGVRGPHDLIAYANAGADAVLVGESLVTGRDPRAAVADLVAAGAHPALRHGRG.

Belongs to the TrpC family.

The enzyme catalyses 1-(2-carboxyphenylamino)-1-deoxy-D-ribulose 5-phosphate + H(+) = (1S,2R)-1-C-(indol-3-yl)glycerol 3-phosphate + CO2 + H2O. It functions in the pathway amino-acid biosynthesis; L-tryptophan biosynthesis; L-tryptophan from chorismate: step 4/5. This chain is Indole-3-glycerol phosphate synthase, found in Streptomyces griseus subsp. griseus (strain JCM 4626 / CBS 651.72 / NBRC 13350 / KCC S-0626 / ISP 5235).